The primary structure comprises 255 residues: 5'-nucleotidase SurE (255 aa).

A divalent metal cation contacts are provided by aspartate 8, aspartate 9, serine 39, and asparagine 95.

It belongs to the SurE nucleotidase family. A divalent metal cation is required as a cofactor.

Its subcellular location is the cytoplasm. The enzyme catalyses a ribonucleoside 5'-phosphate + H2O = a ribonucleoside + phosphate. Nucleotidase that shows phosphatase activity on nucleoside 5'-monophosphates. This chain is 5'-nucleotidase SurE, found in Thermosipho melanesiensis (strain DSM 12029 / CIP 104789 / BI429).